A 193-amino-acid polypeptide reads, in one-letter code: PBAN-type neuropeptides (193 aa).

A signal peptide spans 1 to 19 (MYGAVLPGLFFIFISCVVA). At I46 the chain carries Isoleucine amide. Leucine amide is present on residues L102 and L122. Residues 124–158 (RRLADDTPATPADQEMYRPDPEQIDSRTKYFSPRL) form a disordered region. Residues 138–151 (EMYRPDPEQIDSRT) show a composition bias toward basic and acidic residues. Leucine amide is present on residues L158 and L168. A propeptide spanning residues 186 to 193 (STNKTQST) is cleaved from the precursor.

This sequence belongs to the pyrokinin family. In terms of tissue distribution, expressed in the mandibular, maxillary and labial neuromeres of the male and female brain-subesophageal ganglions, in the corpora cardiaca and all around the corpora allata, and at a lower level in the brain near the calyx and pedunculus of the mushroom body (at protein level). Expressed in larvae and adult of both sexes (at protein level). As to expression, expressed in corpora cardiaca (CC), corpora allata (CA) and gnathal ganglion (GNG) (at protein level). Expression in CC and CA detected in most animals, in GNG in some (at protein level). Expression not detected in CC, CA, AL or GNG (at protein level). In terms of tissue distribution, expressed in corpora cardiaca (CC), corpora allata (CA), antennal lobe (AL) and gnathal ganglion (GNG) (at protein level). Expression in CC, CA and GNG detected in most animals, expression in AL detected in few (at protein level). As to expression, expressed in corpora cardiaca (CC), corpora allata (CA), antennal lobe (AL) and gnathal ganglion (GNG) (at protein level). Expression in CC, CA and GNG detected in all animals, expression in AL detected in some (at protein level). Expressed in corpora cardiaca (CC), corpora allata (CA), antennal lobe (AL) and gnathal ganglion (GNG) (at protein level). Expression in CC, CA and GNG detected in most animals, expression in AL detected in some animals (at protein level).

The protein resides in the secreted. Functionally, a hormone that controls sex pheromone production in female moths and pheromone responsiveness in male. In Agrotis ipsilon (Black cutworm moth), this protein is PBAN-type neuropeptides.